A 542-amino-acid polypeptide reads, in one-letter code: MSTSLSAWQSLREHAAKIRHTHMRDWFTGPQGQARSVRLTVEACGLTLDYAKNRVTEDTLSLLFALARQARVCERRDAMFAGEPVNTTERRAALHMALRAHPGDGYRALGVPVEADVSAVLAQMERFARDVRSGSWTGFDGRAITDVVNIGIGGSDLGPRMVCRALEQDTEPGPRLHFVANVDGYDLARTLARLDAATTLVIVCSKTFTTLETMANARTARDWFLRHGVTHSDLARHFVAVSTNRDAVAAFGIDPVNMFPFWDWVGGRFSLWSAVGLSIAVAIGFDRFRQLLDGARAMDRHFAGAPPEQNLPMILGLLDVWYRSFLGTASRCVAPYCEPLDLLPAFLQQLEMESNGKSVQHDGAALEAGSAAVVWGTTGTNGQHAYFQMVHQGSQLVPVDFIACLQPHSDLPGHHTKLLANCFAQGEALLRGRTADEVRAEGKADEALVPHLVFEGNRPSNTLLLQRLDAFHLGALLAMSEHRTFVQGALWNINPFDQWGVELGKMLARPIERELEGAPPQPHDASTAALIRRAAQFCASTD.

Glu353 (proton donor) is an active-site residue. Catalysis depends on residues His384 and Lys505.

It belongs to the GPI family.

The protein resides in the cytoplasm. It catalyses the reaction alpha-D-glucose 6-phosphate = beta-D-fructose 6-phosphate. The protein operates within carbohydrate biosynthesis; gluconeogenesis. It functions in the pathway carbohydrate degradation; glycolysis; D-glyceraldehyde 3-phosphate and glycerone phosphate from D-glucose: step 2/4. Catalyzes the reversible isomerization of glucose-6-phosphate to fructose-6-phosphate. The sequence is that of Glucose-6-phosphate isomerase 2 from Cupriavidus pinatubonensis (strain JMP 134 / LMG 1197) (Cupriavidus necator (strain JMP 134)).